The primary structure comprises 288 residues: Acetyl-coenzyme A carboxylase carboxyl transferase subunit beta (288 aa).

Residues 34-288 (LFSKCPACKV…RLLRMHGGVR (255 aa)) form the CoA carboxyltransferase N-terminal domain. Residues Cys38, Cys41, Cys56, and Cys59 each coordinate Zn(2+). Residues 38 to 59 (CPACKVILYKNDLGLEKTCQHC) form a C4-type zinc finger.

The protein belongs to the AccD/PCCB family. In terms of assembly, acetyl-CoA carboxylase is a heterohexamer composed of biotin carboxyl carrier protein (AccB), biotin carboxylase (AccC) and two subunits each of ACCase subunit alpha (AccA) and ACCase subunit beta (AccD). Zn(2+) serves as cofactor.

The protein localises to the cytoplasm. It carries out the reaction N(6)-carboxybiotinyl-L-lysyl-[protein] + acetyl-CoA = N(6)-biotinyl-L-lysyl-[protein] + malonyl-CoA. The protein operates within lipid metabolism; malonyl-CoA biosynthesis; malonyl-CoA from acetyl-CoA: step 1/1. Functionally, component of the acetyl coenzyme A carboxylase (ACC) complex. Biotin carboxylase (BC) catalyzes the carboxylation of biotin on its carrier protein (BCCP) and then the CO(2) group is transferred by the transcarboxylase to acetyl-CoA to form malonyl-CoA. This is Acetyl-coenzyme A carboxylase carboxyl transferase subunit beta from Streptococcus suis (strain 98HAH33).